Reading from the N-terminus, the 509-residue chain is Maturase K (509 aa).

This sequence belongs to the intron maturase 2 family. MatK subfamily.

The protein localises to the plastid. It is found in the chloroplast. In terms of biological role, usually encoded in the trnK tRNA gene intron. Probably assists in splicing its own and other chloroplast group II introns. The protein is Maturase K of Drimys granadensis.